A 259-amino-acid chain; its full sequence is Proteasome subunit alpha (259 aa).

The interval 222 to 259 (RITGPALEQLIPAEPAPASEPAPESKPDTETKPADPQD) is disordered. Residues 244 to 259 (PESKPDTETKPADPQD) are compositionally biased toward basic and acidic residues.

Belongs to the peptidase T1A family. In terms of assembly, the 20S proteasome core is composed of 14 alpha and 14 beta subunits that assemble into four stacked heptameric rings, resulting in a barrel-shaped structure. The two inner rings, each composed of seven catalytic beta subunits, are sandwiched by two outer rings, each composed of seven alpha subunits. The catalytic chamber with the active sites is on the inside of the barrel. Has a gated structure, the ends of the cylinder being occluded by the N-termini of the alpha-subunits. Is capped by the proteasome-associated ATPase, ARC.

The protein localises to the cytoplasm. It participates in protein degradation; proteasomal Pup-dependent pathway. Its activity is regulated as follows. The formation of the proteasomal ATPase ARC-20S proteasome complex, likely via the docking of the C-termini of ARC into the intersubunit pockets in the alpha-rings, may trigger opening of the gate for substrate entry. Interconversion between the open-gate and close-gate conformations leads to a dynamic regulation of the 20S proteasome proteolysis activity. Component of the proteasome core, a large protease complex with broad specificity involved in protein degradation. The chain is Proteasome subunit alpha from Rhodococcus jostii (strain RHA1).